A 171-amino-acid chain; its full sequence is Co-chaperone protein HscB (171 aa).

One can recognise a J domain in the interval Asp-2 to Leu-74.

This sequence belongs to the HscB family. In terms of assembly, interacts with HscA and stimulates its ATPase activity. Interacts with IscU.

Functionally, co-chaperone involved in the maturation of iron-sulfur cluster-containing proteins. Seems to help targeting proteins to be folded toward HscA. This is Co-chaperone protein HscB from Escherichia coli (strain SMS-3-5 / SECEC).